A 254-amino-acid chain; its full sequence is Probable membrane transporter protein YjnA (254 aa).

The next 6 helical transmembrane spans lie at 5–25 (IILM…GGAA), 75–95 (AIGS…FPAF), 105–125 (HALG…LFLD), 143–163 (ALTI…SIGS), 187–207 (IAHA…FGSV), and 209–229 (YMLA…GSHL).

This sequence belongs to the 4-toluene sulfonate uptake permease (TSUP) (TC 2.A.102) family.

It is found in the cell membrane. The sequence is that of Probable membrane transporter protein YjnA (yjnA) from Bacillus subtilis (strain 168).